Consider the following 304-residue polypeptide: Calcium release-activated calcium channel protein 1 (304 aa).

Over residues 1–11 the composition is skewed to pro residues; that stretch reads MHPEPAPPPNN. The disordered stretch occupies residues 1–49; sequence MHPEPAPPPNNSNPELPLSGGSSTSGSRRSRRRSGDGEPTGAPPLPPPP. At 1 to 88 the chain is on the cytoplasmic side; sequence MHPEPAPPPN…KLYLSRAKLK (88 aa). A required for generation of inwardly rectifying CRAC currents region spans residues 3–49; sequence PEPAPPPNNSNPELPLSGGSSTSGSRRSRRRSGDGEPTGAPPLPPPP. Residues 12–27 show a composition bias toward low complexity; it reads SNPELPLSGGSSTSGS. Positions 39 to 60 are AKAP5 association region; it reads PTGAPPLPPPPAVSYPDWIGQS. An interaction with STIM1 region spans residues 71-91; sequence SMQALSWRKLYLSRAKLKASS. A helical membrane pass occupies residues 89–106; sequence ASSRTSALLSGFAMVAMV. Residues 107 to 120 lie on the Extracellular side of the membrane; the sequence is EVQLDTDHDYPPGL. The chain crosses the membrane as a helical span at residues 121-141; it reads LIVFSACTTVLVAVHLFALMI. Residues 142-174 are Cytoplasmic-facing; it reads STCILPNIEAVSNVHNLNSVKESPHERMHRHIE. The chain crosses the membrane as a helical span at residues 175-195; it reads LAWAFSTVIGTLLFLAEVVLL. The Extracellular portion of the chain corresponds to 196–237; the sequence is CWVKFLPLKRQAGQPSPTKPPTEPAVVVANSSNNGGITPGEA. N-linked (GlcNAc...) asparagine glycosylation is present at Asn-225. Residues 238-258 form a helical membrane-spanning segment; it reads AAIASTAIMVPCGLVFIVFAV. Over 259-304 the chain is Cytoplasmic; it reads HFYRSLVSHKTDRQFQELNELAEFARLQDQLDHRGDHSLTPGTHYA. The interaction with STIM1 stretch occupies residues 275-295; the sequence is ELNELAEFARLQDQLDHRGDH. Thr-298 is subject to Phosphothreonine.

This sequence belongs to the Orai family. Oligomerizes in homomeric and heteromeric ORAI complexes. Native CRAC channels most likely consist of hexameric ORAI heteromers, implying that diverse ORAI1, ORAI2 and ORAI3 subunit combinations with distinct biophysical properties can operate in a cell-type specific way. ARC channels are heteropentamers consisting of three ORAI1 and two ORAI3 subunits. Interacts with STIM1 and STIM2; this regulates channel activity. Interacts with CALM; this may displace STIM1 and STIM2 and might thereby modulate channel activity. Interacts (via N-terminus) with AKAP5 upon store depletion. Interacts with CRACR2A/EFCAB4B; the interaction is direct and takes place in absence of Ca(2+). Forms a complex with CRACR2A/EFCAB4B and STIM1 at low concentration of Ca(2+), the complex dissociates at elevated Ca(2+) concentrations. Interacts with ASPH (isoform 8). Interacts with SLC35G1. Interacts with UBQLN1. Interacts with ADCY8; interaction is calcium store depletion independent; interaction occurs in membrane raft; interaction increases markedly after store depletion; positively regulates SOCE-induced adenylate cyclase activity; contributes to the targeting of ADCY8 to discrete regions of the plasma membrane that are shielded from other calcium events. Interacts with EFHB; the interaction takes place upon Ca(2+)-store depletion. Interacts (via N- and C-termini) with ATP2C2 (via N-terminus); this interaction regulates Ca(2+) influx at the plasma membrane. Interacts with TSPAN18; this interaction regulates ORAI1 exit from the endoplasmic (ER), and/or Golgi, and trafficking to the cell surface. In terms of processing, N-glycosylated. N-glycosylation inhibits channel activity in T cells. Ubiquitinated. Post-translationally, cys-195 is oxidated, leading to inactivation of channel activity.

It is found in the cell membrane. The protein resides in the basolateral cell membrane. It carries out the reaction Ca(2+)(in) = Ca(2+)(out). Oxidation at Cys-196 leads to inactivation of channel activity. Pore-forming subunit of two major inward rectifying Ca(2+) channels at the plasma membrane: Ca(2+) release-activated Ca(2+) (CRAC) channels and arachidonate-regulated Ca(2+)-selective (ARC) channels. Assembles with ORAI2 and ORAI3 to form hexameric CRAC channels that mediate Ca(2+) influx upon depletion of endoplasmic reticulum Ca(2+) store and channel activation by Ca(2+) sensor STIM1, a process known as store-operated Ca(2+) entry (SOCE). Various pore subunit combinations may account for distinct CRAC channel spatiotemporal and cell-type specific dynamics. ORAI1 mainly contributes to the generation of Ca(2+) plateaus involved in sustained Ca(2+) entry and is dispensable for cytosolic Ca(2+) oscillations, whereas ORAI2 and ORAI3 generate oscillatory patterns. CRAC channels assemble in Ca(2+) signaling microdomains where Ca(2+) influx is coupled to calmodulin and calcineurin signaling and activation of NFAT transcription factors recruited to ORAI1 via AKAP5. Activates NFATC2/NFAT1 and NFATC3/NFAT4-mediated transcriptional responses. CRAC channels are the main pathway for Ca(2+) influx in T cells and promote the immune response to pathogens by activating NFAT-dependent cytokine and chemokine transcription. Assembles with ORAI3 to form channels that mediate store-independent Ca(2+) influx in response to inflammatory metabolites arachidonate or its derivative leukotriene C4, termed ARC and LRC channels respectively. Plays a prominent role in Ca(2+) influx at the basolateral membrane of mammary epithelial cells independently of the Ca(2+) content of endoplasmic reticulum or Golgi stores. May mediate transepithelial transport of large quantities of Ca(2+) for milk secretion. The protein is Calcium release-activated calcium channel protein 1 (Orai1) of Rattus norvegicus (Rat).